Here is a 350-residue protein sequence, read N- to C-terminus: Phosphoribosylformylglycinamidine cyclo-ligase (350 aa).

It belongs to the AIR synthase family.

It localises to the cytoplasm. The enzyme catalyses 2-formamido-N(1)-(5-O-phospho-beta-D-ribosyl)acetamidine + ATP = 5-amino-1-(5-phospho-beta-D-ribosyl)imidazole + ADP + phosphate + H(+). It participates in purine metabolism; IMP biosynthesis via de novo pathway; 5-amino-1-(5-phospho-D-ribosyl)imidazole from N(2)-formyl-N(1)-(5-phospho-D-ribosyl)glycinamide: step 2/2. The sequence is that of Phosphoribosylformylglycinamidine cyclo-ligase from Pseudoalteromonas translucida (strain TAC 125).